The primary structure comprises 392 residues: Outer membrane protein assembly factor BamB (392 aa).

The first 19 residues, 1-19 (MQLRKLLLPGLLSVTLLSG), serve as a signal peptide directing secretion. Cysteine 20 is lipidated: N-palmitoyl cysteine. The S-diacylglycerol cysteine moiety is linked to residue cysteine 20.

This sequence belongs to the BamB family. As to quaternary structure, part of the Bam complex, which is composed of the outer membrane protein BamA, and four lipoproteins BamB, BamC, BamD and BamE.

It is found in the cell outer membrane. Part of the outer membrane protein assembly complex, which is involved in assembly and insertion of beta-barrel proteins into the outer membrane. In Salmonella typhimurium (strain LT2 / SGSC1412 / ATCC 700720), this protein is Outer membrane protein assembly factor BamB.